The following is a 140-amino-acid chain: 3-hydroxyacyl-[acyl-carrier-protein] dehydratase FabZ (140 aa).

The active site involves His47.

It belongs to the thioester dehydratase family. FabZ subfamily.

The protein resides in the cytoplasm. The catalysed reaction is a (3R)-hydroxyacyl-[ACP] = a (2E)-enoyl-[ACP] + H2O. Functionally, involved in unsaturated fatty acids biosynthesis. Catalyzes the dehydration of short chain beta-hydroxyacyl-ACPs and long chain saturated and unsaturated beta-hydroxyacyl-ACPs. The chain is 3-hydroxyacyl-[acyl-carrier-protein] dehydratase FabZ from Streptococcus gordonii (strain Challis / ATCC 35105 / BCRC 15272 / CH1 / DL1 / V288).